The primary structure comprises 354 residues: Phenylalanine 4-monooxygenase, chloroplastic (354 aa).

The transit peptide at 1–60 (MAFPLQKTFLCSNGQSFPCSNGRSTSTLLASDLKFQRLNKPFILRVGSMQIRNSPKEHPR) directs the protein to the chloroplast. Fe cation-binding residues include H229, H234, and E274.

Belongs to the biopterin-dependent aromatic amino acid hydroxylase family. Forms monomers. The cofactor is Fe(2+).

It localises to the plastid. The protein localises to the chloroplast. It carries out the reaction (6R)-L-erythro-5,6,7,8-tetrahydrobiopterin + L-phenylalanine + O2 = (4aS,6R)-4a-hydroxy-L-erythro-5,6,7,8-tetrahydrobiopterin + L-tyrosine. Catalyzes the hydroxylation of L-phenylalanine to L-tyrosine. Does not seem to be tetrahydropterin-dependent and shows preference for 10-formyltetrahydrofolate as cosubstrate and electron donor. This is Phenylalanine 4-monooxygenase, chloroplastic from Pinus taeda (Loblolly pine).